We begin with the raw amino-acid sequence, 280 residues long: Phosphonoacetaldehyde hydrolase (280 aa).

The active-site Nucleophile is the Asp20. Mg(2+) contacts are provided by Asp20 and Ala22. The active-site Schiff-base intermediate with substrate is the Lys61. Asp194 contributes to the Mg(2+) binding site.

This sequence belongs to the HAD-like hydrolase superfamily. PhnX family. As to quaternary structure, homodimer. The cofactor is Mg(2+).

The enzyme catalyses phosphonoacetaldehyde + H2O = acetaldehyde + phosphate + H(+). Its function is as follows. Involved in phosphonate degradation. The protein is Phosphonoacetaldehyde hydrolase of Nitratidesulfovibrio vulgaris (strain DSM 19637 / Miyazaki F) (Desulfovibrio vulgaris).